A 207-amino-acid polypeptide reads, in one-letter code: Large ribosomal subunit protein bL25 (207 aa).

A disordered region spans residues 1-20 (MANHQIKAQRRKDEGKGASR).

It belongs to the bacterial ribosomal protein bL25 family. CTC subfamily. As to quaternary structure, part of the 50S ribosomal subunit; part of the 5S rRNA/L5/L18/L25 subcomplex. Contacts the 5S rRNA. Binds to the 5S rRNA independently of L5 and L18.

In terms of biological role, this is one of the proteins that binds to the 5S RNA in the ribosome where it forms part of the central protuberance. This is Large ribosomal subunit protein bL25 from Xylella fastidiosa (strain M12).